Here is a 157-residue protein sequence, read N- to C-terminus: UPF0225 protein PA14_50900 (157 aa).

Belongs to the UPF0225 family.

The chain is UPF0225 protein PA14_50900 from Pseudomonas aeruginosa (strain UCBPP-PA14).